The chain runs to 385 residues: Methylthioribose-1-phosphate isomerase (385 aa).

Asp256 serves as the catalytic Proton donor.

It belongs to the eIF-2B alpha/beta/delta subunits family. MtnA subfamily.

It localises to the cytoplasm. The protein localises to the nucleus. The enzyme catalyses 5-(methylsulfanyl)-alpha-D-ribose 1-phosphate = 5-(methylsulfanyl)-D-ribulose 1-phosphate. Its pathway is amino-acid biosynthesis; L-methionine biosynthesis via salvage pathway; L-methionine from S-methyl-5-thio-alpha-D-ribose 1-phosphate: step 1/6. Its function is as follows. Catalyzes the interconversion of methylthioribose-1-phosphate (MTR-1-P) into methylthioribulose-1-phosphate (MTRu-1-P). The protein is Methylthioribose-1-phosphate isomerase of Arthroderma otae (strain ATCC MYA-4605 / CBS 113480) (Microsporum canis).